The sequence spans 89 residues: uncharacterized protein (89 aa).

Positions 1–19 (MQLTKTQFVRCVFLLLANS) are cleaved as a signal peptide.

This is an uncharacterized protein from Sulfolobus islandicus filamentous virus (isolate Iceland/Hveragerdi) (SIFV).